The primary structure comprises 361 residues: UPF0283 membrane protein Smed_1530 (361 aa).

The segment at 1 to 40 is disordered; it reads MNDDSNGRRRRPAAFPVGTEDATSRELEQTPRRAPGSFSD. The span at 22–31 shows a compositional bias: basic and acidic residues; the sequence is ATSRELEQTP. The next 2 membrane-spanning stretches (helical) occupy residues 76 to 96 and 109 to 129; these read FGKIAAGAFGILISLAVGLWV and WLGYGAVAVVAIGAAAFLIVV.

This sequence belongs to the UPF0283 family.

The protein resides in the cell inner membrane. This chain is UPF0283 membrane protein Smed_1530, found in Sinorhizobium medicae (strain WSM419) (Ensifer medicae).